The chain runs to 350 residues: MMSQSDSLKGRKVVFHDMCLRDGMHAKREQIGVEQMIAVATALDAAGVPYIQVTHGAGLGGNSLQHGFAPHSNEEYIGAVAAKMKQAKVSVLLIPGLGTMKELQSAFDCGARSVHVATHCTEADTSPQHIAFARKLGMDTSGFLMMSHLNDPAGIARQGKLMESYGAQTVYVTDSAGYMLPEDVKARVGALREVLAPETGIGFHGHHNLGMGIANSIAAIEAGASRIDGSVAGLGAGAGNTPLEVFAAVCERMGIDTGVDLFRLMDVAEDIIVPMMEHVVRVDRESLTLGYAGVYSTFLLHSKRAAERFGVPARDILVELGRKKMIGGQEDMILDTAMSMAKARGLLKSA.

The region spanning 13–265 is the Pyruvate carboxyltransferase domain; it reads VVFHDMCLRD…DTGVDLFRLM (253 aa). Position 21 to 22 (21 to 22) interacts with substrate; that stretch reads RD. Aspartate 22 lines the Mn(2+) pocket. Residue histidine 25 is the Proton acceptor of the active site. Residues serine 175 and histidine 204 each contribute to the substrate site. Histidine 204 and histidine 206 together coordinate Mn(2+). Position 295 (tyrosine 295) interacts with substrate.

This sequence belongs to the 4-hydroxy-2-oxovalerate aldolase family.

It carries out the reaction (S)-4-hydroxy-2-oxopentanoate = acetaldehyde + pyruvate. This is 4-hydroxy-2-oxovalerate aldolase 3 (lapG) from Azotobacter vinelandii (strain DJ / ATCC BAA-1303).